Consider the following 302-residue polypeptide: Spermidine synthase (302 aa).

Met1 carries the N-acetylmethionine modification. Positions 18 to 253 (EGWFRETCSL…GQIGFMLCSK (236 aa)) constitute a PABS domain. An S-adenosyl 3-(methylsulfanyl)propylamine-binding site is contributed by Gln49. Tyr79 lines the putrescine pocket. S-adenosyl 3-(methylsulfanyl)propylamine-binding positions include Gln80, Asp104, Glu124, 155 to 156 (DG), and Asp173. Catalysis depends on Asp173, which acts as the Proton acceptor. Residues 173 to 176 (DSSD) and Tyr241 contribute to the putrescine site.

Belongs to the spermidine/spermine synthase family. As to quaternary structure, homodimer or homotetramer.

It carries out the reaction S-adenosyl 3-(methylsulfanyl)propylamine + putrescine = S-methyl-5'-thioadenosine + spermidine + H(+). The protein operates within amine and polyamine biosynthesis; spermidine biosynthesis; spermidine from putrescine: step 1/1. Its activity is regulated as follows. The activity is thought to be regulated mainly by the availability of decarboxylated S-adenosylmethionine. Functionally, catalyzes the production of spermidine from putrescine and decarboxylated S-adenosylmethionine (dcSAM). Has a strong preference for putrescine as substrate, and has very low activity towards 1,3-diaminopropane. Has extremely low activity towards spermidine. In Homo sapiens (Human), this protein is Spermidine synthase (SRM).